The chain runs to 397 residues: Lysophospholipid transporter LplT (397 aa).

A run of 11 helical transmembrane segments spans residues 16–36 (MMAV…LLFA), 53–73 (VLQM…GQVA), 91–111 (LGAV…LVGV), 139–159 (LMES…GMLA), 164–184 (GAAL…NLLI), 229–249 (WGAG…ALGI), 257–277 (YLNA…AKLV), 282–302 (VSRC…FSLQ), 304–324 (AALP…FFVV), 344–364 (IAVQ…LYSL), and 372–392 (VVGI…GLWL).

It belongs to the major facilitator superfamily. LplT (TC 2.A.1.42) family.

The protein resides in the cell inner membrane. Its function is as follows. Catalyzes the facilitated diffusion of 2-acyl-glycero-3-phosphoethanolamine (2-acyl-GPE) into the cell. The protein is Lysophospholipid transporter LplT of Cronobacter sakazakii (strain ATCC BAA-894) (Enterobacter sakazakii).